Here is a 957-residue protein sequence, read N- to C-terminus: MQPLVMQGCPYTLPRCHEWHAADRFHHSSSLRNTCPQPQVRAAVTIPAPPWDGAGDPCLSPKLLNGSVGAVGPLEPSAMNLCWNEIKKKSHNLRARLEAFSDHSGKLQLPLQEIIDWLSQKDEELSAQLPLQGDVALVQQEKETHAAFMEEVKSKGPYIYSVLESAQAFLSQHPFEELEESHSESKDTSPRQRIQNLSRFVWKQATVASELWEKLTARCVDQHRHIEHTLEHLLEIQGAMEELSSTLTQAEGVRATWEPIGDLFIDSLPEHIQAIKLFKEEFSPVKDGVKLVNDLAHQLAISDVHLSMENSRALEQINVRWKQLQVSVAERLKQLQDAHRDFGPGSQHFLSTSVQVPWERAISPNKVPYYINHQAQTTCWDHPKMTELYQTLADLNNIKFSAYRTAMKLRRVQKALRLDLVTLTTALEIFNEHDLQASEHVMDVVEVIHCLTALYERLEEERGILVNVPLCVDMSLNWLLNVFDSGRSGKMRALSFKTGIACLCGTEVKEKLQYLFSQVANSGSQCDQRHLGALLHEAIQVPRQLGEVAAFGGSNVEPSVRSCFRFSTGKPVIEASQFLEWVNLEPQSMVWLAVLHRVTVAEQVKHQTKCSICRQCPIKGFRYRSLKQFNVDICQTCFLTGKASKGNKLHYPIMEYYTPTTSSENMRDFATTLKNKFRSKQYFSKHPQRGYLPVQSVLESDCSETPASSPMLPHADTHSRIEHFASRLAEMESQNCSFFNDSLSPDDSIDEDQYLLRHSSPITDREPAFGQQAPCSMATESKGELEKILAHLEDENRILQGELRRLKWQHEEAVEAPTLAEGSAEATPDHRNEELLAEARILRQHKSRLETRMQILEDHNKQLESQLQRLRELLLQPPTESDGNGSAGSSLASSPRQSEGSHPREKGQTTPDTEAADDVGSKSQDVSLCLEDIMEKLRHAFPSVRSSDVTANTLLAS.

2 Spectrin repeats span residues 102–179 and 231–337; these read DHSG…EELE and EHLL…QLQD. The region spanning 358–383 is the WW domain; the sequence is WERAISPNKVPYYINHQAQTTCWDHP. Residues 605 to 661 form a ZZ-type; degenerate zinc finger; it reads KHQTKCSICRQCPIKGFRYRSLKQFNVDICQTCFLTGKASKGNKLHYPIMEYYTPTT. Residues cysteine 610, cysteine 613, cysteine 634, and cysteine 637 each coordinate Zn(2+). The residue at position 748 (serine 748) is a Phosphoserine. Over residues 877–894 the composition is skewed to low complexity; that stretch reads PPTESDGNGSAGSSLASS. Residues 877-923 are disordered; sequence PPTESDGNGSAGSSLASSPRQSEGSHPREKGQTTPDTEAADDVGSKS. Residue threonine 910 is modified to Phosphothreonine.

In terms of assembly, interacts with PRX; this enhances phosphorylation. Identified in a dystroglycan complex that contains at least PRX, DRP2, UTRN, DMD and DAG1. In terms of tissue distribution, detected in trigeminal nerve Schwann cells. Detected in brain cortex and hippocampus. Detected in brain membrane fractions and highly enriched in the postsynaptic density (at protein level).

It localises to the postsynaptic density. It is found in the cell projection. The protein resides in the dendrite. The protein localises to the perikaryon. Its subcellular location is the cell membrane. In terms of biological role, required for normal myelination and for normal organization of the cytoplasm and the formation of Cajal bands in myelinating Schwann cells. Required for normal PRX location at appositions between the abaxonal surface of the myelin sheath and the Schwann cell plasma membrane. Possibly involved in membrane-cytoskeleton interactions of the central nervous system. The chain is Dystrophin-related protein 2 (Drp2) from Rattus norvegicus (Rat).